We begin with the raw amino-acid sequence, 330 residues long: Ketol-acid reductoisomerase (NADP(+)) (330 aa).

Residues 1 to 182 (MAVVYYDQDA…GATRAGVIET (182 aa)) form the KARI N-terminal Rossmann domain. NADP(+) contacts are provided by residues 25–28 (YGSQ), arginine 48, serine 51, serine 53, and 83–86 (DETQ). Histidine 108 is a catalytic residue. Glycine 134 is an NADP(+) binding site. One can recognise a KARI C-terminal knotted domain in the interval 183–328 (TFKEETETDL…DQLREMMSWL (146 aa)). The Mg(2+) site is built by aspartate 191, glutamate 195, glutamate 227, and glutamate 231. A substrate-binding site is contributed by serine 252.

It belongs to the ketol-acid reductoisomerase family. Mg(2+) is required as a cofactor.

It carries out the reaction (2R)-2,3-dihydroxy-3-methylbutanoate + NADP(+) = (2S)-2-acetolactate + NADPH + H(+). The enzyme catalyses (2R,3R)-2,3-dihydroxy-3-methylpentanoate + NADP(+) = (S)-2-ethyl-2-hydroxy-3-oxobutanoate + NADPH + H(+). The protein operates within amino-acid biosynthesis; L-isoleucine biosynthesis; L-isoleucine from 2-oxobutanoate: step 2/4. It participates in amino-acid biosynthesis; L-valine biosynthesis; L-valine from pyruvate: step 2/4. In terms of biological role, involved in the biosynthesis of branched-chain amino acids (BCAA). Catalyzes an alkyl-migration followed by a ketol-acid reduction of (S)-2-acetolactate (S2AL) to yield (R)-2,3-dihydroxy-isovalerate. In the isomerase reaction, S2AL is rearranged via a Mg-dependent methyl migration to produce 3-hydroxy-3-methyl-2-ketobutyrate (HMKB). In the reductase reaction, this 2-ketoacid undergoes a metal-dependent reduction by NADPH to yield (R)-2,3-dihydroxy-isovalerate. This chain is Ketol-acid reductoisomerase (NADP(+)), found in Moorella thermoacetica (strain ATCC 39073 / JCM 9320).